A 134-amino-acid polypeptide reads, in one-letter code: Small ribosomal subunit protein uS11 (134 aa).

This sequence belongs to the universal ribosomal protein uS11 family. As to quaternary structure, part of the 30S ribosomal subunit. Interacts with proteins S7 and S18. Binds to IF-3.

Functionally, located on the platform of the 30S subunit, it bridges several disparate RNA helices of the 16S rRNA. Forms part of the Shine-Dalgarno cleft in the 70S ribosome. The polypeptide is Small ribosomal subunit protein uS11 (Herminiimonas arsenicoxydans).